Consider the following 341-residue polypeptide: L-threonine 3-dehydrogenase (341 aa).

Cys38 is a Zn(2+) binding site. Residues Thr40 and His43 each act as charge relay system in the active site. His63, Glu64, Cys93, Cys96, Cys99, and Cys107 together coordinate Zn(2+). Residues Ile175, Asp195, Arg200, 262 to 264 (LGI), and 286 to 287 (IY) contribute to the NAD(+) site.

It belongs to the zinc-containing alcohol dehydrogenase family. In terms of assembly, homotetramer. Zn(2+) serves as cofactor.

Its subcellular location is the cytoplasm. The catalysed reaction is L-threonine + NAD(+) = (2S)-2-amino-3-oxobutanoate + NADH + H(+). It functions in the pathway amino-acid degradation; L-threonine degradation via oxydo-reductase pathway; glycine from L-threonine: step 1/2. Its function is as follows. Catalyzes the NAD(+)-dependent oxidation of L-threonine to 2-amino-3-ketobutyrate. The polypeptide is L-threonine 3-dehydrogenase (Klebsiella pneumoniae subsp. pneumoniae (strain ATCC 700721 / MGH 78578)).